The primary structure comprises 812 residues: MTCSQPNLRVTIIAADGLYKRDVFRFPDPFAVATVGGEQTHTTSVIKKTLNPYWNEMFDLRVNEDSILAIQIFDQKKFKKKDQGFLGVINVRIGDVIDLQMGGDEMLTRDLKKSNDNLVVHGKLIINLSTNLSTPNTNQANGLHRSHMQPSTSSGLVPQVSASTPQPSPGPSQADPTASNPSLHPQRVPSTTRPSSTIVPANGPPAPPNGQQGSRTNLSSFEDSQGRLPAGWERREDNLGRTYYVDHNTRTTTWTRPSNNYNEQTSRTQREASMQLERRAHQSRMLPEDRTGASSPNLQENQQQAQTPPAGGSASAVSMMATGATTAGTGELPPGWEQRTTPEGRPYFVDHNTRTTTWVDPRRQQYIRMYGQNANGTNTTIQQQPVSQLGPLPSGWEMRLTNTARVYFVDHNTKTTTWDDPRLPSSLDQGVPQYKRDFRRKLIYFRSQPALRIMSGQCHVKVRRNNIFEDSYAEIMRQSASDLKKRLMIKFDGEDGLDYGGLSREFFFLLSHEMFNPFYCLFEYSAHDNYTLQINPHSGVNPEHLNYFKFIGRVVGLAIFHRRFLDSFFIGAFYKMMLRKKVSLQDMEGVDEDLHRNLTWTLDNDIEGIIELTFAVDDEKFGERRTIDLKPGGRDIPVTNENKGEYVELVTEWKIVKRVEEQFNAFMSGFNELIPADLVNVFDERELELLIGGIADIDVDDWKKHTDYRGYQESDEVIQNFWKIVRTWDAEQKSRLLQFTTGTSRIPVNGFKDLQGSDGPRRFTIEKSGDPGALPKSHTCFNRLDLPPYKTNDVLEHKLSIAVEETLGFGQE.

One can recognise a C2 domain in the interval 1–109; that stretch reads MTCSQPNLRV…QMGGDEMLTR (109 aa). 2 disordered regions span residues 131–235 and 250–350; these read NLST…WERR and RTTT…YFVD. Composition is skewed to polar residues over residues 148–165, 174–199, 214–223, and 250–267; these read MQPSTSSGLVPQVSASTP, ADPTASNPSLHPQRVPSTTRPSSTIV, SRTNLSSFED, and RTTTWTRPSNNYNEQTSR. In terms of domain architecture, WW 1 spans 226–259; it reads GRLPAGWERREDNLGRTYYVDHNTRTTTWTRPSN. The segment covering 276–291 has biased composition (basic and acidic residues); sequence LERRAHQSRMLPEDRT. Over residues 292–306 the composition is skewed to polar residues; the sequence is GASSPNLQENQQQAQ. Positions 307-330 are enriched in low complexity; the sequence is TPPAGGSASAVSMMATGATTAGTG. 2 WW domains span residues 330 to 363 and 390 to 423; these read GELPPGWEQRTTPEGRPYFVDHNTRTTTWVDPRR and GPLPSGWEMRLTNTARVYFVDHNTKTTTWDDPRL. The HECT domain occupies 479–812; the sequence is SASDLKKRLM…VEETLGFGQE (334 aa). C780 acts as the Glycyl thioester intermediate in catalysis.

The protein belongs to the RSP5/NEDD4 family. Interacts with creD.

It is found in the cytoplasm. The catalysed reaction is S-ubiquitinyl-[E2 ubiquitin-conjugating enzyme]-L-cysteine + [acceptor protein]-L-lysine = [E2 ubiquitin-conjugating enzyme]-L-cysteine + N(6)-ubiquitinyl-[acceptor protein]-L-lysine.. It functions in the pathway protein modification; protein ubiquitination. E3 ubiquitin-protein ligase which accepts ubiquitin from an E2 ubiquitin-conjugating enzyme in the form of a thioester and then directly transfers the ubiquitin to targeted substrates. Probably involved in the regulatory network controlling carbon source utilization. The sequence is that of Probable E3 ubiquitin-protein ligase hulA (hulA) from Aspergillus flavus (strain ATCC 200026 / FGSC A1120 / IAM 13836 / NRRL 3357 / JCM 12722 / SRRC 167).